Here is a 96-residue protein sequence, read N- to C-terminus: Mitochondrial import inner membrane translocase subunit Tim13-B (96 aa).

Positions 47–70 (CFRKCIGKPGGSLDNSEQKCVAMC) match the Twin CX3C motif motif. Intrachain disulfides connect Cys47–Cys70 and Cys51–Cys66.

The protein belongs to the small Tim family. In terms of assembly, heterohexamer; composed of 3 copies of TIMM8 (TIMM8A or TIMM8B) and 3 copies of TIMM13, named soluble 70 kDa complex. Associates with the TIM22 complex, whose core is composed of TIMM22.

It localises to the mitochondrion inner membrane. Functionally, mitochondrial intermembrane chaperone that participates in the import and insertion of some multi-pass transmembrane proteins into the mitochondrial inner membrane. Also required for the transfer of beta-barrel precursors from the TOM complex to the sorting and assembly machinery (SAM complex) of the outer membrane. Acts as a chaperone-like protein that protects the hydrophobic precursors from aggregation and guide them through the mitochondrial intermembrane space. The TIMM8-TIMM13 complex mediates the import of some proteins while the predominant TIMM9-TIMM10 70 kDa complex mediates the import of much more proteins. In Xenopus laevis (African clawed frog), this protein is Mitochondrial import inner membrane translocase subunit Tim13-B (timm13-b).